The sequence spans 318 residues: Probable cell division protein WhiA (318 aa).

A DNA-binding region (H-T-H motif) is located at residues 281–314 (SLKELGQMLVPPVGKSGVNHRLRKIEEISKKLKE).

The protein belongs to the WhiA family.

Involved in cell division and chromosome segregation. This is Probable cell division protein WhiA from Thermoanaerobacter pseudethanolicus (strain ATCC 33223 / 39E) (Clostridium thermohydrosulfuricum).